Reading from the N-terminus, the 500-residue chain is Cytochrome P450 monooxygenase hepD (500 aa).

A helical transmembrane segment spans residues 15–35 (WILLSLSLAFIVVYSLFYLAV). Asn99, Asn185, Asn373, and Asn409 each carry an N-linked (GlcNAc...) asparagine glycan. Residue Cys445 coordinates heme. Asn482 is a glycosylation site (N-linked (GlcNAc...) asparagine).

The protein belongs to the cytochrome P450 family. Heme serves as cofactor.

It localises to the membrane. Its pathway is secondary metabolite biosynthesis. In terms of biological role, cytochrome P450 monooxygenase; part of the gene cluster that mediates the biosynthesis of heptelidic acid (HA), a sesquiterpene lactone that acts as an inhibitor of glyceraldehyde-3-phosphatedehydrogenase (GAPDH) and a growth inhibitor of the salt-tolerant lactic acid bacteria in soy sauce brewing. In Aspergillus oryzae (strain ATCC 42149 / RIB 40) (Yellow koji mold), this protein is Cytochrome P450 monooxygenase hepD.